The primary structure comprises 209 residues: Probable glutathione peroxidase 8 (209 aa).

Position 1 is an N-acetylmethionine (Met1). Residues 18–40 (VFAVLLSIVLCTVTLFLLQLKFL) traverse the membrane as a helical segment. Cys79 is an active-site residue.

Belongs to the glutathione peroxidase family.

It localises to the membrane. It carries out the reaction 2 glutathione + H2O2 = glutathione disulfide + 2 H2O. In Homo sapiens (Human), this protein is Probable glutathione peroxidase 8 (GPX8).